Reading from the N-terminus, the 329-residue chain is Putative helicase 109L (329 aa).

The Helicase ATP-binding domain maps to 105 to 259; the sequence is LTLLTQHKSC…LFDMFFGPEM (155 aa). An ATP-binding site is contributed by 118–125; it reads CYTGFGKT. A DEAH box motif is present at residues 212–215; that stretch reads DEAH.

It belongs to the DEAD box helicase family. DEAH subfamily.

This Invertebrate iridescent virus 3 (IIV-3) protein is Putative helicase 109L.